The chain runs to 132 residues: Small ribosomal subunit protein uS8 (132 aa).

The protein belongs to the universal ribosomal protein uS8 family. As to quaternary structure, part of the 30S ribosomal subunit. Contacts proteins S5 and S12.

Functionally, one of the primary rRNA binding proteins, it binds directly to 16S rRNA central domain where it helps coordinate assembly of the platform of the 30S subunit. The chain is Small ribosomal subunit protein uS8 from Clostridium kluyveri (strain NBRC 12016).